Consider the following 430-residue polypeptide: Adenylosuccinate synthetase (430 aa).

GTP-binding positions include 12–18 (GDEGKGK) and 40–42 (GHT). Catalysis depends on aspartate 13, which acts as the Proton acceptor. Positions 13 and 40 each coordinate Mg(2+). IMP contacts are provided by residues 13 to 16 (DEGK), 38 to 41 (NAGH), threonine 128, arginine 142, glutamine 223, threonine 238, and arginine 302. Catalysis depends on histidine 41, which acts as the Proton donor. Residue 298–304 (VNTGRKR) coordinates substrate. GTP contacts are provided by residues arginine 304, 330–332 (KLD), and 412–414 (GVG).

It belongs to the adenylosuccinate synthetase family. As to quaternary structure, homodimer. Requires Mg(2+) as cofactor.

The protein localises to the cytoplasm. It carries out the reaction IMP + L-aspartate + GTP = N(6)-(1,2-dicarboxyethyl)-AMP + GDP + phosphate + 2 H(+). It functions in the pathway purine metabolism; AMP biosynthesis via de novo pathway; AMP from IMP: step 1/2. Plays an important role in the de novo pathway of purine nucleotide biosynthesis. Catalyzes the first committed step in the biosynthesis of AMP from IMP. The sequence is that of Adenylosuccinate synthetase from Corynebacterium aurimucosum (strain ATCC 700975 / DSM 44827 / CIP 107346 / CN-1) (Corynebacterium nigricans).